A 286-amino-acid chain; its full sequence is ATP synthase gamma chain (286 aa).

It belongs to the ATPase gamma chain family. F-type ATPases have 2 components, CF(1) - the catalytic core - and CF(0) - the membrane proton channel. CF(1) has five subunits: alpha(3), beta(3), gamma(1), delta(1), epsilon(1). CF(0) has three main subunits: a, b and c.

It is found in the cell inner membrane. In terms of biological role, produces ATP from ADP in the presence of a proton gradient across the membrane. The gamma chain is believed to be important in regulating ATPase activity and the flow of protons through the CF(0) complex. The protein is ATP synthase gamma chain of Shewanella sp. (strain ANA-3).